A 957-amino-acid polypeptide reads, in one-letter code: Glycine dehydrogenase (decarboxylating) (957 aa).

K708 carries the N6-(pyridoxal phosphate)lysine modification.

The protein belongs to the GcvP family. As to quaternary structure, the glycine cleavage system is composed of four proteins: P, T, L and H. Pyridoxal 5'-phosphate is required as a cofactor.

The catalysed reaction is N(6)-[(R)-lipoyl]-L-lysyl-[glycine-cleavage complex H protein] + glycine + H(+) = N(6)-[(R)-S(8)-aminomethyldihydrolipoyl]-L-lysyl-[glycine-cleavage complex H protein] + CO2. The glycine cleavage system catalyzes the degradation of glycine. The P protein binds the alpha-amino group of glycine through its pyridoxal phosphate cofactor; CO(2) is released and the remaining methylamine moiety is then transferred to the lipoamide cofactor of the H protein. This chain is Glycine dehydrogenase (decarboxylating), found in Salmonella paratyphi B (strain ATCC BAA-1250 / SPB7).